The following is a 477-amino-acid chain: Ribulose bisphosphate carboxylase large chain (477 aa).

The propeptide occupies 1–2 (MS). The residue at position 3 (Pro3) is an N-acetylproline. Lys14 carries the N6,N6,N6-trimethyllysine modification. The substrate site is built by Asn123 and Thr173. Catalysis depends on Lys175, which acts as the Proton acceptor. Substrate is bound at residue Lys177. Mg(2+) is bound by residues Lys201, Asp203, and Glu204. Lys201 carries the post-translational modification N6-carboxylysine. The Proton acceptor role is filled by His294. Residues Arg295, His327, and Ser379 each coordinate substrate.

This sequence belongs to the RuBisCO large chain family. Type I subfamily. In terms of assembly, heterohexadecamer of 8 large chains and 8 small chains; disulfide-linked. The disulfide link is formed within the large subunit homodimers. Requires Mg(2+) as cofactor. In terms of processing, the disulfide bond which can form in the large chain dimeric partners within the hexadecamer appears to be associated with oxidative stress and protein turnover.

It is found in the plastid. The protein localises to the chloroplast. The enzyme catalyses 2 (2R)-3-phosphoglycerate + 2 H(+) = D-ribulose 1,5-bisphosphate + CO2 + H2O. It carries out the reaction D-ribulose 1,5-bisphosphate + O2 = 2-phosphoglycolate + (2R)-3-phosphoglycerate + 2 H(+). Its function is as follows. RuBisCO catalyzes two reactions: the carboxylation of D-ribulose 1,5-bisphosphate, the primary event in carbon dioxide fixation, as well as the oxidative fragmentation of the pentose substrate in the photorespiration process. Both reactions occur simultaneously and in competition at the same active site. The polypeptide is Ribulose bisphosphate carboxylase large chain (rbcL) (Solanum lycopersicum (Tomato)).